A 666-amino-acid chain; its full sequence is DNA ligase (666 aa).

NAD(+) is bound by residues 31–35 (DYDFD), 80–81 (SL), and E111. K113 functions as the N6-AMP-lysine intermediate in the catalytic mechanism. Positions 134, 170, 285, and 309 each coordinate NAD(+). Zn(2+)-binding residues include C403, C406, C421, and C427. One can recognise a BRCT domain in the interval 587-666 (VVSNKLLGKI…ESDFSALLTS (80 aa)).

This sequence belongs to the NAD-dependent DNA ligase family. LigA subfamily. Requires Mg(2+) as cofactor. Mn(2+) serves as cofactor.

The enzyme catalyses NAD(+) + (deoxyribonucleotide)n-3'-hydroxyl + 5'-phospho-(deoxyribonucleotide)m = (deoxyribonucleotide)n+m + AMP + beta-nicotinamide D-nucleotide.. Functionally, DNA ligase that catalyzes the formation of phosphodiester linkages between 5'-phosphoryl and 3'-hydroxyl groups in double-stranded DNA using NAD as a coenzyme and as the energy source for the reaction. It is essential for DNA replication and repair of damaged DNA. In Flavobacterium psychrophilum (strain ATCC 49511 / DSM 21280 / CIP 103535 / JIP02/86), this protein is DNA ligase.